A 733-amino-acid polypeptide reads, in one-letter code: Phosphoribosylformylglycinamidine synthase subunit PurL (733 aa).

The active site involves His-42. Tyr-45 and Lys-84 together coordinate ATP. Position 86 (Glu-86) interacts with Mg(2+). Substrate contacts are provided by residues 87 to 90 and Arg-109; that span reads SHNH. His-88 acts as the Proton acceptor in catalysis. Asp-110 lines the Mg(2+) pocket. Gln-233 serves as a coordination point for substrate. Asp-261 contacts Mg(2+). 305–307 contributes to the substrate binding site; that stretch reads ESQ. Positions 489 and 526 each coordinate ATP. Asn-527 serves as a coordination point for Mg(2+). Residue Ser-529 coordinates substrate.

Belongs to the FGAMS family. In terms of assembly, monomer. Part of the FGAM synthase complex composed of 1 PurL, 1 PurQ and 2 PurS subunits.

The protein localises to the cytoplasm. It carries out the reaction N(2)-formyl-N(1)-(5-phospho-beta-D-ribosyl)glycinamide + L-glutamine + ATP + H2O = 2-formamido-N(1)-(5-O-phospho-beta-D-ribosyl)acetamidine + L-glutamate + ADP + phosphate + H(+). It functions in the pathway purine metabolism; IMP biosynthesis via de novo pathway; 5-amino-1-(5-phospho-D-ribosyl)imidazole from N(2)-formyl-N(1)-(5-phospho-D-ribosyl)glycinamide: step 1/2. Its function is as follows. Part of the phosphoribosylformylglycinamidine synthase complex involved in the purines biosynthetic pathway. Catalyzes the ATP-dependent conversion of formylglycinamide ribonucleotide (FGAR) and glutamine to yield formylglycinamidine ribonucleotide (FGAM) and glutamate. The FGAM synthase complex is composed of three subunits. PurQ produces an ammonia molecule by converting glutamine to glutamate. PurL transfers the ammonia molecule to FGAR to form FGAM in an ATP-dependent manner. PurS interacts with PurQ and PurL and is thought to assist in the transfer of the ammonia molecule from PurQ to PurL. The chain is Phosphoribosylformylglycinamidine synthase subunit PurL from Moorella thermoacetica (strain ATCC 39073 / JCM 9320).